Here is a 70-residue protein sequence, read N- to C-terminus: Movement protein TGBp3 (70 aa).

The Lumenal segment spans residues 1 to 4 (MEAG). Residues 5-27 (AYLNAIIFVLVATIIAVISRGLT) form a helical membrane-spanning segment. Topologically, residues 28–70 (RTEPCTIRITGESITVHACHIDSETIKALANLKPLSLERLSFQ) are cytoplasmic.

This sequence belongs to the Tymovirales TGBp3 protein family.

It is found in the host endoplasmic reticulum membrane. Plays a role in viral cell-to-cell propagation, by facilitating genome transport to neighboring plant cells through plasmosdesmata. May induce the formation of granular vesicles derived from the Endoplasmic reticulum, which align on actin filaments. This Potato virus X (strain CP) (PVX) protein is Movement protein TGBp3.